The sequence spans 161 residues: uncharacterized protein (161 aa).

This is an uncharacterized protein from Escherichia coli (strain K12).